The sequence spans 344 residues: Anthranilate phosphoribosyltransferase (344 aa).

5-phospho-alpha-D-ribose 1-diphosphate contacts are provided by residues glycine 80, 83–84, threonine 88, 90–93, 108–116, and serine 120; these read GD, NVST, and KHGNRSVSS. Position 80 (glycine 80) interacts with anthranilate. A Mg(2+)-binding site is contributed by serine 92. Asparagine 111 is a binding site for anthranilate. Arginine 166 is a binding site for anthranilate. Residues aspartate 225 and glutamate 226 each coordinate Mg(2+).

It belongs to the anthranilate phosphoribosyltransferase family. In terms of assembly, homodimer. Mg(2+) serves as cofactor.

The enzyme catalyses N-(5-phospho-beta-D-ribosyl)anthranilate + diphosphate = 5-phospho-alpha-D-ribose 1-diphosphate + anthranilate. It participates in amino-acid biosynthesis; L-tryptophan biosynthesis; L-tryptophan from chorismate: step 2/5. Catalyzes the transfer of the phosphoribosyl group of 5-phosphorylribose-1-pyrophosphate (PRPP) to anthranilate to yield N-(5'-phosphoribosyl)-anthranilate (PRA). In Legionella pneumophila (strain Paris), this protein is Anthranilate phosphoribosyltransferase.